Reading from the N-terminus, the 157-residue chain is Ribonuclease H (157 aa).

Residues 1 to 146 enclose the RNase H type-1 domain; it reads MPDLVAYTDG…ADELARAGMA (146 aa). 4 residues coordinate Mg(2+): Asp-9, Glu-52, Asp-74, and Asp-138.

Belongs to the RNase H family. Monomer. Mg(2+) is required as a cofactor.

It is found in the cytoplasm. The enzyme catalyses Endonucleolytic cleavage to 5'-phosphomonoester.. Its function is as follows. Endonuclease that specifically degrades the RNA of RNA-DNA hybrids. This Jannaschia sp. (strain CCS1) protein is Ribonuclease H.